We begin with the raw amino-acid sequence, 518 residues long: Membrane-bound lytic murein transglycosylase F (518 aa).

Positions 1–21 (MKKLKINYLFIGILALLLAVA) are cleaved as a signal peptide. The tract at residues 22-269 (LWPSIPWFGK…RIEEKYLGHG (248 aa)) is non-LT domain. The interval 270–518 (DDFDYVDTRT…SRKGSEEKQN (249 aa)) is LT domain. The active site involves Glu314.

The protein in the N-terminal section; belongs to the bacterial solute-binding protein 3 family. In the C-terminal section; belongs to the transglycosylase Slt family.

Its subcellular location is the cell outer membrane. The catalysed reaction is Exolytic cleavage of the (1-&gt;4)-beta-glycosidic linkage between N-acetylmuramic acid (MurNAc) and N-acetylglucosamine (GlcNAc) residues in peptidoglycan, from either the reducing or the non-reducing ends of the peptidoglycan chains, with concomitant formation of a 1,6-anhydrobond in the MurNAc residue.. Murein-degrading enzyme that degrades murein glycan strands and insoluble, high-molecular weight murein sacculi, with the concomitant formation of a 1,6-anhydromuramoyl product. Lytic transglycosylases (LTs) play an integral role in the metabolism of the peptidoglycan (PG) sacculus. Their lytic action creates space within the PG sacculus to allow for its expansion as well as for the insertion of various structures such as secretion systems and flagella. The polypeptide is Membrane-bound lytic murein transglycosylase F (Shigella dysenteriae serotype 1 (strain Sd197)).